We begin with the raw amino-acid sequence, 120 residues long: Piercer of microtubule wall 2 protein (120 aa).

Residues 1-10 (MTECDWEKKS) are compositionally biased toward basic and acidic residues. The interval 1-25 (MTECDWEKKSTSASNSDTEMKPELP) is disordered.

The protein belongs to the PIERCE2 family. In terms of assembly, microtubule inner protein component of sperm flagellar doublet microtubules. Interacts with CFAP53, ODAD1 and ODAD3; the interactions link the outer dynein arms docking complex (ODA-DC) to the internal microtubule inner proteins (MIP) in cilium axoneme. Expressed in trachea multiciliated cells.

Its subcellular location is the cytoplasm. It is found in the cytoskeleton. It localises to the cilium axoneme. The protein resides in the flagellum axoneme. Its function is as follows. Microtubule inner protein involved in the attachment of outer dynein arms (ODAs) to dynein-decorated doublet microtubules (DMTs) in cilia axoneme, which is required for motile cilia beating. This chain is Piercer of microtubule wall 2 protein (PIERCE2), found in Bos taurus (Bovine).